Reading from the N-terminus, the 125-residue chain is Histone H1-like protein HC1 (125 aa).

This sequence belongs to the histone H1/H5 family. HCT subfamily.

Its function is as follows. Might have a role analogous to that of eukaryotic histone proteins. This chain is Histone H1-like protein HC1 (hctA), found in Chlamydia muridarum (strain MoPn / Nigg).